The following is a 988-amino-acid chain: Fanconi-associated nuclease 1 (988 aa).

The tract at residues 1–39 (MESQTGRKSARRLSMTKKKSQSVCPIKERTSNGGAASIT) is disordered. Positions 8–20 (KSARRLSMTKKKS) are enriched in basic residues. A UBZ4-type zinc finger spans residues 49 to 77 (KLACPLCGKLVPRYKINEHIDSQCQNFLV). Zn(2+)-binding residues include cysteine 52, cysteine 55, histidine 67, and cysteine 72. Disordered regions lie at residues 87–115 (TKAP…TSPF), 164–256 (TRVS…NTTE), and 269–307 (SSIE…TTQE). The segment covering 89–98 (APSNSALASN) has biased composition (polar residues). 2 stretches are compositionally biased toward basic and acidic residues: residues 99–111 (NERE…KDAD) and 167–182 (SDNE…RSQK). The span at 183-195 (ENCMNSLTFGSER) shows a compositional bias: polar residues. Positions 224–238 (SDSSISSDVHTSSSS) are enriched in low complexity. The span at 272–283 (ERGDESKVKSDQ) shows a compositional bias: basic and acidic residues. Polar residues predominate over residues 284–303 (TEASSSAYDVPTSKSPIKSK). A coiled-coil region spans residues 636 to 663 (SRGVEILQRLKRYEDAVEQLRNLLSQSV). Positions 805, 931, 946, and 947 each coordinate Mn(2+). The 113-residue stretch at 866 to 978 (VETLQDLIAD…GADVEVCHVT (113 aa)) folds into the VRR-NUC domain.

The protein belongs to the FAN1 family. Interacts with fancd2 (when monoubiquitinated). Mn(2+) serves as cofactor. Mg(2+) is required as a cofactor.

The protein resides in the nucleus. The catalysed reaction is Hydrolytically removes 5'-nucleotides successively from the 3'-hydroxy termini of 3'-hydroxy-terminated oligonucleotides.. In terms of biological role, nuclease required for the repair of DNA interstrand cross-links (ICL) recruited at sites of DNA damage by monoubiquitinated FANCD2. Specifically involved in repair of ICL-induced DNA breaks by being required for efficient homologous recombination, probably in the resolution of homologous recombination intermediates. Acts as a 5'-3' exonuclease that anchors at a cut end of DNA and cleaves DNA successively at every third nucleotide, allowing to excise an ICL from one strand through flanking incisions. Probably keeps excising with 3'-flap annealing until it reaches and unhooks the ICL. Acts at sites that have a 5'-terminal phosphate anchor at a nick or a 1- or 2-nucleotide flap and is augmented by a 3' flap. Also has endonuclease activity toward 5'-flaps. In Danio rerio (Zebrafish), this protein is Fanconi-associated nuclease 1 (fan1).